We begin with the raw amino-acid sequence, 273 residues long: Flagellin FljM (273 aa).

It belongs to the bacterial flagellin family. In terms of assembly, in C.crescentus, the flagellar filament is composed of multiple flagellins of 29 kDa; 27 kDa and 25 kDa.

The protein resides in the secreted. It localises to the bacterial flagellum. Its function is as follows. Flagellin is the subunit protein which polymerizes to form the filaments of bacterial flagella. The chain is Flagellin FljM (fljM) from Caulobacter vibrioides (strain ATCC 19089 / CIP 103742 / CB 15) (Caulobacter crescentus).